The primary structure comprises 284 residues: Bifunctional protein FolD (284 aa).

Residues 166–168 and isoleucine 232 each bind NADP(+); that span reads GAS.

This sequence belongs to the tetrahydrofolate dehydrogenase/cyclohydrolase family. As to quaternary structure, homodimer.

It carries out the reaction (6R)-5,10-methylene-5,6,7,8-tetrahydrofolate + NADP(+) = (6R)-5,10-methenyltetrahydrofolate + NADPH. The enzyme catalyses (6R)-5,10-methenyltetrahydrofolate + H2O = (6R)-10-formyltetrahydrofolate + H(+). Its pathway is one-carbon metabolism; tetrahydrofolate interconversion. Its function is as follows. Catalyzes the oxidation of 5,10-methylenetetrahydrofolate to 5,10-methenyltetrahydrofolate and then the hydrolysis of 5,10-methenyltetrahydrofolate to 10-formyltetrahydrofolate. The polypeptide is Bifunctional protein FolD (Shewanella pealeana (strain ATCC 700345 / ANG-SQ1)).